The chain runs to 209 residues: Putative cardiolipin synthase (209 aa).

Helical transmembrane passes span 27–47 (AFVY…ILVF), 82–102 (VTVP…VLTL), 126–146 (VTYV…TILL), and 157–177 (LLAC…WAFV).

Belongs to the CDP-alcohol phosphatidyltransferase class-I family.

It localises to the cell membrane. It carries out the reaction a CDP-1,2-diacyl-sn-glycerol + a 1,2-diacyl-sn-glycero-3-phospho-(1'-sn-glycerol) = a cardiolipin + CMP + H(+). The protein operates within lipid metabolism; phospholipid metabolism. May catalyze the biosynthesis of cardiolipin from phosphatidylglycerol (PG) and CDP-diacylglycerol. This Mycobacterium bovis (strain ATCC BAA-935 / AF2122/97) protein is Putative cardiolipin synthase.